A 156-amino-acid chain; its full sequence is Ribosomal RNA large subunit methyltransferase H (156 aa).

S-adenosyl-L-methionine is bound by residues Leu-73, Gly-104, and 123 to 128; that span reads LSPLTL.

The protein belongs to the RNA methyltransferase RlmH family. In terms of assembly, homodimer.

Its subcellular location is the cytoplasm. The catalysed reaction is pseudouridine(1915) in 23S rRNA + S-adenosyl-L-methionine = N(3)-methylpseudouridine(1915) in 23S rRNA + S-adenosyl-L-homocysteine + H(+). Its function is as follows. Specifically methylates the pseudouridine at position 1915 (m3Psi1915) in 23S rRNA. In Photorhabdus laumondii subsp. laumondii (strain DSM 15139 / CIP 105565 / TT01) (Photorhabdus luminescens subsp. laumondii), this protein is Ribosomal RNA large subunit methyltransferase H.